We begin with the raw amino-acid sequence, 226 residues long: Thioredoxin domain-containing protein 9 (226 aa).

Residues 52-180 (LEALKKAQQQ…TTETLEWRLG (129 aa)) enclose the Thioredoxin domain. Phosphoserine occurs at positions 188, 221, and 223.

As to quaternary structure, forms ternary complexes with the chaperonin TCP1 complex, spanning the cylindrical chaperonin cavity and contacting at least 2 subunits.

Its subcellular location is the cytoplasm. It is found in the nucleus. It localises to the cytoskeleton. The protein localises to the microtubule organizing center. The protein resides in the centrosome. Its subcellular location is the midbody. Its function is as follows. Significantly diminishes the chaperonin TCP1 complex ATPase activity, thus negatively impacts protein folding, including that of actin or tubulin. The polypeptide is Thioredoxin domain-containing protein 9 (TXNDC9) (Bos taurus (Bovine)).